Reading from the N-terminus, the 295-residue chain is Pyridoxal 5'-phosphate synthase subunit PdxS (295 aa).

Asp-25 contacts D-ribose 5-phosphate. Lys-82 serves as the catalytic Schiff-base intermediate with D-ribose 5-phosphate. Gly-154 serves as a coordination point for D-ribose 5-phosphate. D-glyceraldehyde 3-phosphate is bound at residue Arg-166. Residues Gly-215 and 236–237 (GS) each bind D-ribose 5-phosphate.

This sequence belongs to the PdxS/SNZ family. In the presence of PdxT, forms a dodecamer of heterodimers.

The catalysed reaction is aldehydo-D-ribose 5-phosphate + D-glyceraldehyde 3-phosphate + L-glutamine = pyridoxal 5'-phosphate + L-glutamate + phosphate + 3 H2O + H(+). Its pathway is cofactor biosynthesis; pyridoxal 5'-phosphate biosynthesis. Catalyzes the formation of pyridoxal 5'-phosphate from ribose 5-phosphate (RBP), glyceraldehyde 3-phosphate (G3P) and ammonia. The ammonia is provided by the PdxT subunit. Can also use ribulose 5-phosphate and dihydroxyacetone phosphate as substrates, resulting from enzyme-catalyzed isomerization of RBP and G3P, respectively. This is Pyridoxal 5'-phosphate synthase subunit PdxS from Macrococcus caseolyticus (strain JCSC5402) (Macrococcoides caseolyticum).